A 70-amino-acid polypeptide reads, in one-letter code: Small ribosomal subunit protein bS21C (70 aa).

It belongs to the bacterial ribosomal protein bS21 family.

In Burkholderia pseudomallei (strain 1710b), this protein is Small ribosomal subunit protein bS21C.